The following is a 364-amino-acid chain: 3-methyl-2-oxobutanoate hydroxymethyltransferase 1, mitochondrial (364 aa).

A mitochondrion-targeting transit peptide spans 1-59 (MMMMMRRAFRHLARQQRRPLSHVPESAVYGGPRPQDVGAAAGAGAGAGATRRVTVTTLR). Asp-94 and Asp-133 together coordinate Mg(2+). Residues 94 to 95 (DS), Asp-133, and Lys-163 each bind 3-methyl-2-oxobutanoate. Glu-165 provides a ligand contact to Mg(2+). The active-site Proton acceptor is the Glu-233.

Belongs to the PanB family. Mg(2+) is required as a cofactor.

The protein resides in the mitochondrion. The catalysed reaction is 3-methyl-2-oxobutanoate + (6R)-5,10-methylene-5,6,7,8-tetrahydrofolate + H2O = 2-dehydropantoate + (6S)-5,6,7,8-tetrahydrofolate. The protein operates within cofactor biosynthesis; (R)-pantothenate biosynthesis; (R)-pantoate from 3-methyl-2-oxobutanoate: step 1/2. Functionally, catalyzes the reversible reaction in which hydroxymethyl group from 5,10-methylenetetrahydrofolate is transferred onto alpha-ketoisovalerate to form ketopantoate. The protein is 3-methyl-2-oxobutanoate hydroxymethyltransferase 1, mitochondrial (KPHMT1) of Oryza sativa subsp. japonica (Rice).